We begin with the raw amino-acid sequence, 384 residues long: Large ribosomal subunit protein uL3m (384 aa).

Disordered regions lie at residues 80–101 and 237–262; these read NQVT…KRRE and QEAS…SGSR. The segment covering 240 to 249 has biased composition (polar residues); the sequence is SHGNSLNHRT.

It belongs to the universal ribosomal protein uL3 family. Component of the mitochondrial large ribosomal subunit (mt-LSU). Mature N.crassa 74S mitochondrial ribosomes consist of a small (37S) and a large (54S) subunit. The 37S small subunit contains a 16S ribosomal RNA (16S mt-rRNA) and 32 different proteins. The 54S large subunit contains a 23S rRNA (23S mt-rRNA) and 42 different proteins.

The protein localises to the mitochondrion. Its function is as follows. Component of the mitochondrial ribosome (mitoribosome), a dedicated translation machinery responsible for the synthesis of mitochondrial genome-encoded proteins, including at least some of the essential transmembrane subunits of the mitochondrial respiratory chain. The mitoribosomes are attached to the mitochondrial inner membrane and translation products are cotranslationally integrated into the membrane. The chain is Large ribosomal subunit protein uL3m (mrpl9) from Neurospora crassa (strain ATCC 24698 / 74-OR23-1A / CBS 708.71 / DSM 1257 / FGSC 987).